The chain runs to 592 residues: Tetrathionate sensor histidine kinase TtrS (592 aa).

2 helical membrane-spanning segments follow: residues 11–31 (VLAA…NIGI) and 307–327 (VGGV…VMLL). In terms of domain architecture, Histidine kinase spans 364–581 (GFAHELNQPL…VVTIHFLHEN (218 aa)). Phosphohistidine; by autocatalysis is present on His-367.

Autophosphorylated.

It is found in the cell inner membrane. It carries out the reaction ATP + protein L-histidine = ADP + protein N-phospho-L-histidine.. Member of the two-component regulatory system TtrR/TtrS, which is required for synthesis of tetrathionate reductase. Probably functions as a sensor protein kinase which is autophosphorylated at a histidine residue in response to tetrathionate, and transfers its phosphate group to TtrR. During mice infection, the ability to use tetrathionate as an electron acceptor is a growth advantage for S.typhimurium over the competing microbiota in the lumen of the inflamed gut. This Salmonella typhimurium (strain LT2 / SGSC1412 / ATCC 700720) protein is Tetrathionate sensor histidine kinase TtrS (ttrS).